Here is a 272-residue protein sequence, read N- to C-terminus: Phosphatidylglycerol--prolipoprotein diacylglyceryl transferase (272 aa).

The next 3 helical transmembrane spans lie at 19–39 (ISIR…YFLV), 58–78 (LNTV…VVFY), and 94–114 (WHGG…GLIF). Arg-141 lines the a 1,2-diacyl-sn-glycero-3-phospho-(1'-sn-glycerol) pocket. The next 2 helical transmembrane spans lie at 207-227 (GTIL…IENF) and 234-254 (LGFI…MILC).

It belongs to the Lgt family.

The protein localises to the cell inner membrane. It carries out the reaction L-cysteinyl-[prolipoprotein] + a 1,2-diacyl-sn-glycero-3-phospho-(1'-sn-glycerol) = an S-1,2-diacyl-sn-glyceryl-L-cysteinyl-[prolipoprotein] + sn-glycerol 1-phosphate + H(+). The protein operates within protein modification; lipoprotein biosynthesis (diacylglyceryl transfer). In terms of biological role, catalyzes the transfer of the diacylglyceryl group from phosphatidylglycerol to the sulfhydryl group of the N-terminal cysteine of a prolipoprotein, the first step in the formation of mature lipoproteins. In Desulfotalea psychrophila (strain LSv54 / DSM 12343), this protein is Phosphatidylglycerol--prolipoprotein diacylglyceryl transferase.